Here is a 704-residue protein sequence, read N- to C-terminus: Pentatricopeptide repeat-containing protein At1g56690, mitochondrial (704 aa).

Residues 1–12 (MKRLKLILRRTY) constitute a mitochondrion transit peptide. 15 PPR repeats span residues 16 to 46 (TGVN…LQFK), 47 to 81 (AIGS…NVVS), 82 to 108 (WNGL…MPER), 109 to 143 (NVVS…NEVS), 144 to 170 (WTVM…MPVK), 171 to 205 (DVVA…NVVT), 206 to 232 (WTTM…MPEK), 233 to 267 (TEVS…PVIA), 268 to 294 (CNAM…MEDR), 295 to 329 (DNAT…GVRP), 330 to 364 (SFPS…QFDD), 365 to 395 (DVYV…FSSK), 396 to 430 (DIIM…GTMP), 431 to 465 (NKVT…FCVT), and 467 to 497 (TVEH…MTIK). The tract at residues 502 to 577 (VWGALLGACK…FPGCSWIEVG (76 aa)) is type E motif. Positions 578 to 609 (KKVHMFTRGGIKNHPEQAMILMMLEKTDGLLR) are type E(+) motif. Residues 610–704 (EAGYSPDCSH…NGECSCRDYW (95 aa)) form a type DYW motif region.

The protein belongs to the PPR family. PCMP-H subfamily.

Its subcellular location is the mitochondrion. This chain is Pentatricopeptide repeat-containing protein At1g56690, mitochondrial (PCMP-H69), found in Arabidopsis thaliana (Mouse-ear cress).